Reading from the N-terminus, the 661-residue chain is PAN2-PAN3 deadenylation complex subunit pan3 (661 aa).

Disordered stretches follow at residues 1–29 and 53–131; these read MASVGKPSLEDARRGTGSPKMKARENAKD and DPHK…RQDA. Residues 26 to 55 form a C3H1-type zinc finger; it reads NAKDTLCRNVTIYGRCRYEDKGCAFNHDPH. The PABPC-interacting motif-2 (PAM-2) signature appears at 63-83; it reads NASKKRFNVDSPSFTPSLLPS. A compositionally biased stretch (low complexity) spans 77-104; the sequence is TPSLLPSNGSSPTSSSSSLKKSSTISPK. Residues 115 to 126 show a composition bias toward polar residues; the sequence is TAASRSNTSTPG. The interval 263-524 is pseudokinase domain; it reads QTLPNTQLPA…NIDILINGIS (262 aa). ATP is bound by residues arginine 315, 364–371, and 424–425; these read DYHPLSKT and SK. Residues 525-563 are a coiled coil; that stretch reads SQLMSTFDSALHLDDQLTSDLGRELENGRLVRLLTKLNF. The knob domain stretch occupies residues 564-661; the sequence is INERPEHEHD…ALLRPSRRPH (98 aa).

Belongs to the protein kinase superfamily. PAN3 family. In terms of assembly, homodimer. Forms a heterotrimer with a catalytic subunit pan2 to form the poly(a)-nuclease (PAN) deadenylation complex. Interacts (via PAM-2 motif) with poly(A)-binding protein pab1 (via PABC domain), conferring substrate specificity of the enzyme complex.

It localises to the cytoplasm. Its function is as follows. Regulatory subunit of the poly(A)-nuclease (PAN) deadenylation complex, one of two cytoplasmic mRNA deadenylases involved in mRNA turnover. PAN specifically shortens poly(A) tails of RNA and the activity is stimulated by poly(A)-binding protein pab1. PAN deadenylation is followed by rapid degradation of the shortened mRNA tails by the CCR4-NOT complex. Deadenylated mRNAs are then degraded by two alternative mechanisms, namely exosome-mediated 3'-5' exonucleolytic degradation, or deadenylation-dependent mRNA decaping and subsequent 5'-3' exonucleolytic degradation by XRN1. May also be involved in post-transcriptional maturation of mRNA poly(A) tails. pan3 acts as a positive regulator for PAN activity, recruiting the catalytic subunit pan2 to mRNA via its interaction with RNA and with pab1. This chain is PAN2-PAN3 deadenylation complex subunit pan3, found in Emericella nidulans (strain FGSC A4 / ATCC 38163 / CBS 112.46 / NRRL 194 / M139) (Aspergillus nidulans).